The following is a 196-amino-acid chain: Phosphoheptose isomerase (196 aa).

One can recognise an SIS domain in the interval Leu-33–Thr-192. Asn-48–Gly-50 contributes to the substrate binding site. Residues His-57 and Glu-61 each coordinate Zn(2+). Residues Glu-61, Asn-90–Asp-91, Ser-116–Ser-118, Ser-121, and Gln-168 each bind substrate. Zn(2+) contacts are provided by Gln-168 and His-176.

It belongs to the SIS family. GmhA subfamily. Homotetramer. Zn(2+) serves as cofactor.

Its subcellular location is the cytoplasm. It carries out the reaction 2 D-sedoheptulose 7-phosphate = D-glycero-alpha-D-manno-heptose 7-phosphate + D-glycero-beta-D-manno-heptose 7-phosphate. It participates in carbohydrate biosynthesis; D-glycero-D-manno-heptose 7-phosphate biosynthesis; D-glycero-alpha-D-manno-heptose 7-phosphate and D-glycero-beta-D-manno-heptose 7-phosphate from sedoheptulose 7-phosphate: step 1/1. Catalyzes the isomerization of sedoheptulose 7-phosphate in D-glycero-D-manno-heptose 7-phosphate. In Helicobacter hepaticus (strain ATCC 51449 / 3B1), this protein is Phosphoheptose isomerase.